The chain runs to 241 residues: MEAAADGPAETQSPVQKDSPAKTQSPAQDTSIMSRNNADTGRVLALPEHKKKRKGNLPAESVKILRDWMYKHRFKAYPSEEEKQMLSEKTNLSLLQISNWFINARRRILPDMLQQHRNDPIIGHKTGKGAHATHLQSTEASVPAKSGPSGPDNVQSLPLWPLPKGQMSREKQPDPESAPSQKLTGIAQPKKKVKVSITSPSSPELVSPEEYADFSSFLLLVDAAVQRAAELELEKKQEPNP.

Disordered stretches follow at residues 1–58 (MEAA…GNLP) and 127–207 (GKGA…ELVS). Polar residues predominate over residues 10-39 (ETQSPVQKDSPAKTQSPAQDTSIMSRNNAD). The segment at residues 48–111 (EHKKKRKGNL…INARRRILPD (64 aa)) is a DNA-binding region (homeobox; TALE-type).

Belongs to the TALE/TGIF homeobox family.

It is found in the nucleus. Functionally, may have a transcription role in testis. The sequence is that of Homeobox protein TGIF2LX (TGIF2LX) from Pan paniscus (Pygmy chimpanzee).